A 163-amino-acid polypeptide reads, in one-letter code: Nucleotide-binding protein APJL_1242 (163 aa).

This sequence belongs to the YajQ family.

In terms of biological role, nucleotide-binding protein. The chain is Nucleotide-binding protein APJL_1242 from Actinobacillus pleuropneumoniae serotype 3 (strain JL03).